A 424-amino-acid polypeptide reads, in one-letter code: CinA-like protein (424 aa).

This sequence belongs to the CinA family.

The protein is CinA-like protein of Prochlorococcus marinus (strain MIT 9301).